The chain runs to 262 residues: Acyl-[acyl-carrier-protein]--UDP-N-acetylglucosamine O-acyltransferase (262 aa).

It belongs to the transferase hexapeptide repeat family. LpxA subfamily. As to quaternary structure, homotrimer.

The protein resides in the cytoplasm. The catalysed reaction is a (3R)-hydroxyacyl-[ACP] + UDP-N-acetyl-alpha-D-glucosamine = a UDP-3-O-[(3R)-3-hydroxyacyl]-N-acetyl-alpha-D-glucosamine + holo-[ACP]. It functions in the pathway glycolipid biosynthesis; lipid IV(A) biosynthesis; lipid IV(A) from (3R)-3-hydroxytetradecanoyl-[acyl-carrier-protein] and UDP-N-acetyl-alpha-D-glucosamine: step 1/6. Its function is as follows. Involved in the biosynthesis of lipid A, a phosphorylated glycolipid that anchors the lipopolysaccharide to the outer membrane of the cell. This is Acyl-[acyl-carrier-protein]--UDP-N-acetylglucosamine O-acyltransferase from Sodalis glossinidius (strain morsitans).